Reading from the N-terminus, the 670-residue chain is Nitrate import ATP-binding protein NrtC (670 aa).

The ABC transporter domain maps to 5-239 (IEIDHVDRIF…RPRHRLEVVN (235 aa)). 42-49 (GHSGCGKS) lines the ATP pocket. The tract at residues 255-278 (NQQKRAKKVGAVSQFAEAMGGNGL) is linker. Positions 279–670 (EKINLDLGFI…LIDQIDQVNQ (392 aa)) are nrtA-like.

This sequence belongs to the ABC transporter superfamily. Nitrate/nitrite/cyanate uptake transporter (NitT) (TC 3.A.1.16) family. The complex is composed of two ATP-binding proteins (NrtC and NrtD), two transmembrane proteins (NrtB) and a solute-binding protein (NrtA).

It is found in the cell inner membrane. It catalyses the reaction nitrate(out) + ATP + H2O = nitrate(in) + ADP + phosphate + H(+). Functionally, part of the ABC transporter complex NrtABCD involved in nitrate uptake. The complex is probably also involved in nitrite transport. Probably responsible for energy coupling to the transport system. The polypeptide is Nitrate import ATP-binding protein NrtC (nrtC) (Synechocystis sp. (strain ATCC 27184 / PCC 6803 / Kazusa)).